The chain runs to 231 residues: Uracil phosphoribosyltransferase (231 aa).

Residue 38-42 (KGLVR) coordinates GTP. Residues Arg87, Arg112, and 140–148 (DPMIATGST) contribute to the 5-phospho-alpha-D-ribose 1-diphosphate site. Residues Ile203 and 208–210 (GDA) each bind uracil. Residue Asp209 participates in 5-phospho-alpha-D-ribose 1-diphosphate binding.

Belongs to the UPRTase family. Requires Mg(2+) as cofactor.

The catalysed reaction is UMP + diphosphate = 5-phospho-alpha-D-ribose 1-diphosphate + uracil. It participates in pyrimidine metabolism; UMP biosynthesis via salvage pathway; UMP from uracil: step 1/1. Allosterically activated by GTP. Catalyzes the conversion of uracil and 5-phospho-alpha-D-ribose 1-diphosphate (PRPP) to UMP and diphosphate. The protein is Uracil phosphoribosyltransferase of Methanococcus maripaludis (strain C6 / ATCC BAA-1332).